Consider the following 163-residue polypeptide: Nucleotide-binding protein MAV_4575 (163 aa).

Belongs to the YajQ family.

Its function is as follows. Nucleotide-binding protein. In Mycobacterium avium (strain 104), this protein is Nucleotide-binding protein MAV_4575.